Consider the following 1533-residue polypeptide: DNA topoisomerase 2-alpha (1533 aa).

Position 1 is an N-acetylmethionine (Met-1). A disordered region spans residues 1 to 22 (MEVSPLQPVNENMQVNKTKKNE). Ser-4 carries the phosphoserine modification. Over residues 7–16 (QPVNENMQVN) the composition is skewed to polar residues. Residue Lys-17 forms a Glycyl lysine isopeptide (Lys-Gly) (interchain with G-Cter in SUMO2) linkage. Residues Asn-91, Asn-120, and 148 to 150 (SSN) contribute to the ATP site. Residues Lys-156 and Lys-157 each participate in a glycyl lysine isopeptide (Lys-Gly) (interchain with G-Cter in SUMO2) cross-link. 161 to 168 (GRNGYGAK) is an ATP binding site. A Glycyl lysine isopeptide (Lys-Gly) (interchain with G-Cter in SUMO2) cross-link involves residue Lys-261. Thr-282 bears the Phosphothreonine mark. The segment at 342–344 (KKK) is interaction with DNA. A Glycyl lysine isopeptide (Lys-Gly) (interchain with G-Cter in SUMO2) cross-link involves residue Lys-352. 376–378 (QTK) serves as a coordination point for ATP. Residues Lys-386, Lys-397, Lys-416, Lys-418, Lys-425, and Lys-440 each participate in a glycyl lysine isopeptide (Lys-Gly) (interchain with G-Cter in SUMO2) cross-link. One can recognise a Toprim domain in the interval 455–572 (CTLILTEGDS…SLLRHRFLEE (118 aa)). Glu-461 is a Mg(2+) binding site. Residues Lys-466, Lys-480, and Lys-529 each participate in a glycyl lysine isopeptide (Lys-Gly) (interchain with G-Cter in SUMO2) cross-link. Residues Asp-541 and Asp-543 each contribute to the Mg(2+) site. Residues Lys-584, Lys-599, Lys-614, Lys-622, Lys-625, Lys-632, Lys-639, Lys-655, Lys-662, and Lys-676 each participate in a glycyl lysine isopeptide (Lys-Gly) (interchain with G-Cter in SUMO2) cross-link. Residues 715–1171 (IPSMVDGLKP…SPSDLWKEDL (457 aa)) enclose the Topo IIA-type catalytic domain. Catalysis depends on Tyr-805, which acts as the O-(5'-phospho-DNA)-tyrosine intermediate. The tract at residues 990–999 (KLQTSLTCNS) is interaction with DNA. Lys-1075 participates in a covalent cross-link: Glycyl lysine isopeptide (Lys-Gly) (interchain with G-Cter in SUMO2). 2 disordered regions span residues 1090–1121 (WKEAQQKVPDEEENEESDNEKEADKSDSVADS) and 1183–1215 (AKEKQDEQIGLPGKGGKAKGKKTQMAEVLPSPC). The segment covering 1099–1108 (DEEENEESDN) has biased composition (acidic residues). Ser-1106 carries the phosphoserine; by CK1 modification. Glycyl lysine isopeptide (Lys-Gly) (interchain with G-Cter in SUMO2) cross-links involve residues Lys-1114, Lys-1196, and Lys-1204. Thr-1205 is modified (phosphothreonine). At Ser-1213 the chain carries Phosphoserine. Lys-1228 is covalently cross-linked (Glycyl lysine isopeptide (Lys-Gly) (interchain with G-Cter in SUMO2)). The tract at residues 1231 to 1533 (AEKKIKKKIK…LEESDEDDLF (303 aa)) is disordered. A Glycyl lysine isopeptide (Lys-Gly) (interchain with G-Cter in SUMO1); alternate cross-link involves residue Lys-1240. Lys-1240 participates in a covalent cross-link: Glycyl lysine isopeptide (Lys-Gly) (interchain with G-Cter in SUMO2); alternate. Thr-1244 carries the post-translational modification Phosphothreonine. Ser-1247 carries the post-translational modification Phosphoserine. Over residues 1256–1272 (EGLKQRLEKKQKREPGT) the composition is skewed to basic and acidic residues. Residues Lys-1259, Lys-1276, Lys-1283, and Lys-1286 each participate in a glycyl lysine isopeptide (Lys-Gly) (interchain with G-Cter in SUMO2) cross-link. Phosphoserine occurs at positions 1295, 1297, 1299, and 1302. Thr-1327 is modified (phosphothreonine). Phosphoserine occurs at positions 1332 and 1337. Thr-1343 bears the Phosphothreonine mark. A phosphoserine mark is found at Ser-1351 and Ser-1354. A compositionally biased stretch (basic and acidic residues) spans 1360–1371 (TSPKHTNKEPKP). Residues Lys-1363, Lys-1367, and Lys-1373 each participate in a glycyl lysine isopeptide (Lys-Gly) (interchain with G-Cter in SUMO2) cross-link. Phosphoserine occurs at positions 1374 and 1377. Lys-1387 is covalently cross-linked (Glycyl lysine isopeptide (Lys-Gly) (interchain with G-Cter in SUMO2)). Ser-1393 and Ser-1395 each carry phosphoserine. Residues 1409–1433 (KPVSKKNVTVKKTAAKSQSSTSTTG) are compositionally biased toward low complexity. Lys-1424 participates in a covalent cross-link: Glycyl lysine isopeptide (Lys-Gly) (interchain with G-Cter in SUMO2); alternate. At Lys-1424 the chain carries N6-acetyllysine; alternate. The segment at 1435 to 1441 (KKRAAPK) is interaction with PLSCR1. Residues 1443–1455 (AKKDPDLDSDVSK) are compositionally biased toward basic and acidic residues. Lys-1444 participates in a covalent cross-link: Glycyl lysine isopeptide (Lys-Gly) (interchain with G-Cter in SUMO2); alternate. An N6-acetyllysine; alternate modification is found at Lys-1444. Phosphoserine is present on Ser-1451. Glycyl lysine isopeptide (Lys-Gly) (interchain with G-Cter in SUMO2) cross-links involve residues Lys-1456 and Lys-1461. Ser-1471 is subject to Phosphoserine. Phosphothreonine is present on Thr-1472. A phosphoserine mark is found at Ser-1473, Ser-1476, and Ser-1478. Glycyl lysine isopeptide (Lys-Gly) (interchain with G-Cter in SUMO2) cross-links involve residues Lys-1486 and Lys-1494. Residues 1493–1504 (PKGESDDFHLDL) are compositionally biased toward basic and acidic residues. A phosphoserine mark is found at Ser-1497 and Ser-1527.

It belongs to the type II topoisomerase family. As to quaternary structure, homodimer. Interacts with COPS5. Interacts with RECQL5; this stimulates DNA decatenation. Interacts with SETMAR; stimulates the topoisomerase activity. Interacts with DHX9; this interaction occurs in a E2 enzyme UBE2I- and RNA-dependent manner, negatively regulates DHX9-mediated double-stranded DNA and RNA duplex helicase activity and stimulates TOP2A-mediated supercoiled DNA relaxation activity. Interacts with HNRNPU (via C-terminus); this interaction protects the topoisomerase TOP2A from degradation and positively regulates the relaxation of supercoiled DNA in a RNA-dependent manner. Interacts with MCM3AP. Interacts with ERCC6. Interacts with PLSCR1. Interacts with GCNA; this interaction allows the resolution of topoisomerase II (TOP2A) DNA-protein cross-links. Interacts with POL1RA/RPA1 (via dock II) and UBTF in the context of Pol I complex; may assist Pol I transcription initiation by releasing supercoils occurring during DNA unwinding. Interacts with TPRN; TPRN interacts with a number of DNA damage response proteins, is recruited to sites of DNA damage and may play a role in DNA damage repair. Mg(2+) is required as a cofactor. It depends on Mn(2+) as a cofactor. Requires Ca(2+) as cofactor. In terms of processing, phosphorylation has no effect on catalytic activity. However, phosphorylation at Ser-1106 by CSNK1D/CK1 promotes DNA cleavable complex formation.

The protein localises to the cytoplasm. The protein resides in the nucleus. Its subcellular location is the nucleoplasm. It localises to the nucleolus. It catalyses the reaction ATP-dependent breakage, passage and rejoining of double-stranded DNA.. Its function is as follows. Key decatenating enzyme that alters DNA topology by binding to two double-stranded DNA molecules, generating a double-stranded break in one of the strands, passing the intact strand through the broken strand, and religating the broken strand. May play a role in regulating the period length of BMAL1 transcriptional oscillation. In Sus scrofa (Pig), this protein is DNA topoisomerase 2-alpha (TOP2A).